The following is a 381-amino-acid chain: Cytochrome b (381 aa).

4 helical membrane passes run 34–54, 78–99, 114–134, and 179–199; these read FGSLLGLCLIIQILTGLFLAM, WLIRNIHANGASLFFICVYLHI, WNIGVILLFLLMATAFVGYVL, and FFAFHFLLPFLILALTIIHLL. H84 and H98 together coordinate heme b. 2 residues coordinate heme b: H183 and H197. H202 contributes to the a ubiquinone binding site. 4 helical membrane-spanning segments follow: residues 227-247, 289-309, 321-341, and 348-368; these read YKDLLGFFVMIFFLAVFALFM, LGGVLALLFSIFILMLVPLLH, MTQIFFWLLVANSIILTWIGG, and FIMVGQIASISYFSLFLIIMP.

Belongs to the cytochrome b family. In terms of assembly, the cytochrome bc1 complex contains 3 respiratory subunits (MT-CYB, CYC1 and UQCRFS1), 2 core proteins (UQCRC1 and UQCRC2) and probably 6 low-molecular weight proteins. Requires heme b as cofactor.

It localises to the mitochondrion inner membrane. Its function is as follows. Component of the ubiquinol-cytochrome c reductase complex (complex III or cytochrome b-c1 complex) that is part of the mitochondrial respiratory chain. The b-c1 complex mediates electron transfer from ubiquinol to cytochrome c. Contributes to the generation of a proton gradient across the mitochondrial membrane that is then used for ATP synthesis. This is Cytochrome b (mt-cyb) from Carcharhinus plumbeus (Sandbar shark).